The following is a 1332-amino-acid chain: Delta-poly-L-ornithine synthetase (1332 aa).

The L-ornithine site is built by D217, E221, and T304. 4 residues coordinate D-ornithine: E221, T304, G306, and T308. Residues V312 and S313 each coordinate L-ornithine. S313 is a binding site for D-ornithine. In terms of domain architecture, Carrier spans 524-601 (QPQNPAEEIL…AIAALMLEQP (78 aa)). S560 is modified (O-(pantetheine 4'-phosphoryl)serine). The next 6 membrane-spanning stretches (helical) occupy residues 629 to 649 (LVTI…PFFT), 664 to 684 (AIAL…VLSI), 868 to 888 (VSAL…FLLV), 908 to 928 (LYYF…TAVI), 1120 to 1140 (IVLP…DVID), and 1151 to 1171 (LVAL…IVAL).

It belongs to the ATP-dependent AMP-binding enzyme family. The cofactor is pantetheine 4'-phosphate.

The protein resides in the cell membrane. It catalyses the reaction n L-ornithine + n ATP + H2O = N(5)-(L-ornithyl)-[N(5)-(L-ornithyl)]n-1 + n AMP + n diphosphate + n H(+). It carries out the reaction n D-ornithine + n ATP + H2O = N(5)-(D-ornithyl)-[N(5)-(D-ornithyl)]n-1 + n AMP + n diphosphate + n H(+). Its function is as follows. Catalyzes the polymerization of L-ornithine, generating poly-L-ornithine composed of 7-12 amino acid units joined via isopeptide bonds between the carboxylate and the side chain amine. This polymer exhibits potent antifungal activity and thus may have a potential role in survival benefit for A.baumannii. The reaction occurs via ATP-dependent adenylation of the substrate. Can also adenylate D-ornithine with similar efficiency and thus may produce D-ornithine polymers. This chain is Delta-poly-L-ornithine synthetase, found in Acinetobacter baumannii (strain AB307-0294).